The following is a 78-amino-acid chain: Large ribosomal subunit protein bL28 (78 aa).

The disordered stretch occupies residues 1–20; that stretch reads MSRVCQVTSKRPAVGNNRSH.

The protein belongs to the bacterial ribosomal protein bL28 family.

The polypeptide is Large ribosomal subunit protein bL28 (Haemophilus ducreyi (strain 35000HP / ATCC 700724)).